Here is a 313-residue protein sequence, read N- to C-terminus: Nematocyst expressed protein 8 (313 aa).

The N-terminal stretch at 1–19 (MLRRPLLLVLFTVFSTLYA) is a signal peptide. The disordered stretch occupies residues 24-56 (GVSPPTNESEAEVSPGDDEGPPEPGNEPDVNWR). The span at 32–44 (SEAEVSPGDDEGP) shows a compositional bias: acidic residues. 3 ShKT domains span residues 65–99 (CKDK…CRFC), 109–145 (CKDL…CELC), and 151–186 (FKYT…CRKY). 7 disulfide bridges follow: Cys-65–Cys-99, Cys-72–Cys-92, Cys-81–Cys-96, Cys-109–Cys-145, Cys-127–Cys-142, Cys-160–Cys-179, and Cys-169–Cys-183. A compositionally biased stretch (low complexity) spans 222 to 244 (TAAPSTQPAETTKAPPNTAAPTA). Residues 222-313 (TAAPSTQPAE…LCDEKHSSQQ (92 aa)) form a disordered region. The span at 245–265 (APTPAPTPAPAPAPTPAPVAP) shows a compositional bias: pro residues. Residues 280 to 297 (TPEEQDDNSADESTEIEA) show a composition bias toward acidic residues.

The protein belongs to the NEP3 family. Nematocytes. In late planulae, is only expressed in a handful of nematocytes in the lower pharynx. Is absent from the tentacles and outer body wall.

It is found in the nematocyst. The protein localises to the secreted. Its function is as follows. Probable toxin probably only used for predation. This chain is Nematocyst expressed protein 8, found in Nematostella vectensis (Starlet sea anemone).